Reading from the N-terminus, the 160-residue chain is Transcription elongation factor GreA (160 aa).

A coiled-coil region spans residues 1–72 (MAEKTYPMTL…QISSLETKIR (72 aa)).

This sequence belongs to the GreA/GreB family.

Necessary for efficient RNA polymerase transcription elongation past template-encoded arresting sites. The arresting sites in DNA have the property of trapping a certain fraction of elongating RNA polymerases that pass through, resulting in locked ternary complexes. Cleavage of the nascent transcript by cleavage factors such as GreA or GreB allows the resumption of elongation from the new 3'terminus. GreA releases sequences of 2 to 3 nucleotides. This chain is Transcription elongation factor GreA, found in Streptococcus gordonii (strain Challis / ATCC 35105 / BCRC 15272 / CH1 / DL1 / V288).